The chain runs to 315 residues: Ribose-phosphate pyrophosphokinase (315 aa).

Residues 40–42 (DGE) and 99–100 (RQ) contribute to the ATP site. Residues histidine 133 and aspartate 175 each coordinate Mg(2+). The active site involves lysine 198. D-ribose 5-phosphate contacts are provided by residues arginine 200, aspartate 224, and 228–232 (DTAHS).

This sequence belongs to the ribose-phosphate pyrophosphokinase family. Class I subfamily. In terms of assembly, homohexamer. The cofactor is Mg(2+).

Its subcellular location is the cytoplasm. It carries out the reaction D-ribose 5-phosphate + ATP = 5-phospho-alpha-D-ribose 1-diphosphate + AMP + H(+). It functions in the pathway metabolic intermediate biosynthesis; 5-phospho-alpha-D-ribose 1-diphosphate biosynthesis; 5-phospho-alpha-D-ribose 1-diphosphate from D-ribose 5-phosphate (route I): step 1/1. In terms of biological role, involved in the biosynthesis of the central metabolite phospho-alpha-D-ribosyl-1-pyrophosphate (PRPP) via the transfer of pyrophosphoryl group from ATP to 1-hydroxyl of ribose-5-phosphate (Rib-5-P). This is Ribose-phosphate pyrophosphokinase from Thermotoga maritima (strain ATCC 43589 / DSM 3109 / JCM 10099 / NBRC 100826 / MSB8).